A 155-amino-acid chain; its full sequence is Transcription antitermination protein NusB (155 aa).

Belongs to the NusB family.

Involved in transcription antitermination. Required for transcription of ribosomal RNA (rRNA) genes. Binds specifically to the boxA antiterminator sequence of the ribosomal RNA (rrn) operons. The polypeptide is Transcription antitermination protein NusB (Mesorhizobium japonicum (strain LMG 29417 / CECT 9101 / MAFF 303099) (Mesorhizobium loti (strain MAFF 303099))).